The following is a 370-amino-acid chain: Peptide chain release factor 1 (370 aa).

Gln-231 is modified (N5-methylglutamine). Over residues Ala-284 to Arg-293 the composition is skewed to basic and acidic residues. The disordered stretch occupies residues Ala-284–Ser-303.

This sequence belongs to the prokaryotic/mitochondrial release factor family. Post-translationally, methylated by PrmC. Methylation increases the termination efficiency of RF1.

It is found in the cytoplasm. Its function is as follows. Peptide chain release factor 1 directs the termination of translation in response to the peptide chain termination codons UAG and UAA. This is Peptide chain release factor 1 from Deinococcus geothermalis (strain DSM 11300 / CIP 105573 / AG-3a).